A 144-amino-acid polypeptide reads, in one-letter code: Signal recognition particle 19 kDa protein (144 aa).

Residues 117–144 (TRTQKTGGGDQSLQQGEGSKKGKGKKKK) are disordered.

The protein belongs to the SRP19 family. As to quaternary structure, component of a signal recognition particle complex that consists of a 7SL RNA molecule of 300 nucleotides and six protein subunits: SRP72, SRP68, SRP54, SRP19, SRP14 and SRP9. Interacts with IPO5, IPO7, IPO8, KPNB1 and TNPO1. Interactions with IPO8 and TNPO1 may be involved in SRP19 import into the nucleus.

Its subcellular location is the cytoplasm. The protein localises to the nucleus. It is found in the nucleolus. It localises to the nucleoplasm. Its function is as follows. Component of the signal recognition particle (SRP) complex, a ribonucleoprotein complex that mediates the cotranslational targeting of secretory and membrane proteins to the endoplasmic reticulum (ER). Binds directly to 7SL RNA. Mediates binding of SRP54 to the SRP complex. The sequence is that of Signal recognition particle 19 kDa protein from Canis lupus familiaris (Dog).